A 201-amino-acid polypeptide reads, in one-letter code: Proteinase inhibitor type-2 CEVI57 (201 aa).

Positions 1-23 (MAVYKVSFLAHLLVLGMYLLVST) are cleaved as a signal peptide. A run of 3 repeats spans residues 27–83 (ANAC…DPKN), 84–143 (PNIC…IEPK), and 144–199 (GCTK…QSIS). 8 disulfide bridges follow: C30–C118, C34–C114, C42–C124, C54–C91, C57–C75, C58–C87, C64–C100, and C117–C135.

The protein belongs to the protease inhibitor I20 (potato type II proteinase inhibitor) family.

This chain is Proteinase inhibitor type-2 CEVI57 (CEVI57), found in Solanum lycopersicum (Tomato).